A 663-amino-acid chain; its full sequence is Drug sensory protein A (663 aa).

The next 3 membrane-spanning stretches (helical) occupy residues Leu32 to Val52, Val165 to Pro185, and Val199 to Ala219. The 53-residue stretch at Leu220 to Ala272 folds into the HAMP domain. Residues Glu281–Gln351 enclose the PAS domain. One can recognise a Histidine kinase domain in the interval Asn429–Gln656. His432 carries the post-translational modification Phosphohistidine; by autocatalysis.

It localises to the cell membrane. It catalyses the reaction ATP + protein L-histidine = ADP + protein N-phospho-L-histidine.. The protein is Drug sensory protein A (dspA) of Synechocystis sp. (strain ATCC 27184 / PCC 6803 / Kazusa).